The following is a 1382-amino-acid chain: Ninein-like protein (1382 aa).

EF-hand domains are found at residues 7–42 (HYVS…LHLE) and 41–76 (LEQQ…VLSS). Residues 144–164 (ASLESVESPKSDEEAESTKEA) are disordered. Residue serine 148 is modified to Phosphoserine. Over residues 150-164 (ESPKSDEEAESTKEA) the composition is skewed to basic and acidic residues. 2 consecutive EF-hand domains span residues 196-231 (TPES…VGLQ) and 233-268 (LEKE…HEPA). Ca(2+) contacts are provided by aspartate 246, aspartate 248, aspartate 250, lysine 252, and glutamate 257. 3 coiled-coil regions span residues 384-424 (QELS…MDDC), 484-579 (AGLR…WARL), and 616-699 (IETE…QLQD). A KEN box motif is present at residues 495 to 497 (KEN). Residues 633 to 641 (RTQLETKVN) carry the D-box motif. 2 disordered regions span residues 857–969 (PLAW…ASCR) and 982–1006 (RARS…GALE). Over residues 991–1004 (QEQASEQQARAEGA) the composition is skewed to low complexity. Positions 1046-1375 (ETKIALEREK…RALNKLVSRI (330 aa)) form a coiled coil.

As to quaternary structure, interacts with gamma-tubulin and TUBGCP4. Interacts with anaphase promoting complex/cyclosome (APC/C). Interacts with CDC20 and FZR1. Isoform 2 interacts with LCA5 and USH2A. Isoform 2 interacts with DZANK1. Phosphorylated by PLK1 which disrupts its centrosome association and interaction with gamma-tubulin. In terms of processing, ubiquitinated by the APC/C complex leading to its degradation. Expressed in KYSE-150 esophageal carcinoma, HeLa cervical carcinoma and U2OS osteosarcoma cells. Expression is regulated in a cell cycle-dependent manner and peaks during G2/M phase (at protein level). Expressed in fetal heart, skeletal muscle, liver, lung and cochlea, and in adult brain, testis, kidney and retina.

The protein resides in the cytoplasm. It localises to the cytoskeleton. It is found in the microtubule organizing center. Its subcellular location is the centrosome. Involved in the microtubule organization in interphase cells. Overexpression induces the fragmentation of the Golgi, and causes lysosomes to disperse toward the cell periphery; it also interferes with mitotic spindle assembly. Involved in vesicle transport in photoreceptor cells. May play a role in ovarian carcinogenesis. The sequence is that of Ninein-like protein (NINL) from Homo sapiens (Human).